The primary structure comprises 158 residues: MSKLTHIDDQGRARMVDVSEKPATAREAVAAGFVRMSAETLALAISGSGRKGDVRAVAELAGVMAAKKTSDLIPLCHPLALSKVEVAVEPADGGLSVTARVKTTGPTGVEMEALTAASVACLTIYDMLKAAEKGMVIEAVRLLEKTGGKSGDWKADQP.

Substrate is bound by residues 75–77 (LCH) and 111–112 (ME). Asp-126 is a catalytic residue.

Belongs to the MoaC family. Homohexamer; trimer of dimers.

It catalyses the reaction (8S)-3',8-cyclo-7,8-dihydroguanosine 5'-triphosphate = cyclic pyranopterin phosphate + diphosphate. It functions in the pathway cofactor biosynthesis; molybdopterin biosynthesis. Catalyzes the conversion of (8S)-3',8-cyclo-7,8-dihydroguanosine 5'-triphosphate to cyclic pyranopterin monophosphate (cPMP). The protein is Cyclic pyranopterin monophosphate synthase of Caulobacter vibrioides (strain ATCC 19089 / CIP 103742 / CB 15) (Caulobacter crescentus).